Reading from the N-terminus, the 96-residue chain is DNA-directed RNA polymerase subunit Rpo11 (96 aa).

It belongs to the archaeal Rpo11/eukaryotic RPB11/RPC19 RNA polymerase subunit family. In terms of assembly, part of the RNA polymerase complex.

The protein localises to the cytoplasm. The catalysed reaction is RNA(n) + a ribonucleoside 5'-triphosphate = RNA(n+1) + diphosphate. In terms of biological role, DNA-dependent RNA polymerase (RNAP) catalyzes the transcription of DNA into RNA using the four ribonucleoside triphosphates as substrates. The polypeptide is DNA-directed RNA polymerase subunit Rpo11 (Nanoarchaeum equitans (strain Kin4-M)).